A 90-amino-acid chain; its full sequence is Acylphosphatase (90 aa).

The 87-residue stretch at 4 to 90 (RMYVKVYGIV…KGEFNNFDTY (87 aa)) folds into the Acylphosphatase-like domain. Catalysis depends on residues arginine 19 and asparagine 37.

It belongs to the acylphosphatase family.

The enzyme catalyses an acyl phosphate + H2O = a carboxylate + phosphate + H(+). This chain is Acylphosphatase (acyP), found in Sulfurisphaera tokodaii (strain DSM 16993 / JCM 10545 / NBRC 100140 / 7) (Sulfolobus tokodaii).